Here is a 389-residue protein sequence, read N- to C-terminus: S-adenosylmethionine synthase (389 aa).

H15 is a binding site for ATP. Residue D17 participates in Mg(2+) binding. Position 43 (E43) interacts with K(+). E56 and Q99 together coordinate L-methionine. The segment at 99 to 109 (QSPDIAQGVNE) is flexible loop. Residues 166–168 (DAK), 234–235 (RF), D243, 249–250 (RK), A266, and K270 each bind ATP. D243 is a binding site for L-methionine. Position 274 (K274) interacts with L-methionine.

Belongs to the AdoMet synthase family. As to quaternary structure, homotetramer; dimer of dimers. The cofactor is Mg(2+). Requires K(+) as cofactor.

The protein localises to the cytoplasm. The enzyme catalyses L-methionine + ATP + H2O = S-adenosyl-L-methionine + phosphate + diphosphate. It participates in amino-acid biosynthesis; S-adenosyl-L-methionine biosynthesis; S-adenosyl-L-methionine from L-methionine: step 1/1. Functionally, catalyzes the formation of S-adenosylmethionine (AdoMet) from methionine and ATP. The overall synthetic reaction is composed of two sequential steps, AdoMet formation and the subsequent tripolyphosphate hydrolysis which occurs prior to release of AdoMet from the enzyme. The sequence is that of S-adenosylmethionine synthase from Neisseria meningitidis serogroup A / serotype 4A (strain DSM 15465 / Z2491).